A 296-amino-acid chain; its full sequence is 5,10-methylenetetrahydrofolate reductase (296 aa).

Catalysis depends on Glu28, which acts as the Proton donor/acceptor. Thr59 is an NADH binding site. 14 residues coordinate FAD: Tyr60, Ala62, His88, Arg118, Gly119, Asp120, Ala132, Tyr152, His156, Ala159, Asp165, Asn168, Arg171, and Lys172. (6S)-5-methyl-5,6,7,8-tetrahydrofolate is bound at residue Asp120. Gln183 is an NADH binding site. Gln183, Gln219, and Arg279 together coordinate (6S)-5-methyl-5,6,7,8-tetrahydrofolate.

The protein belongs to the methylenetetrahydrofolate reductase family. The cofactor is FAD.

It catalyses the reaction (6S)-5-methyl-5,6,7,8-tetrahydrofolate + NAD(+) = (6R)-5,10-methylene-5,6,7,8-tetrahydrofolate + NADH + H(+). Its pathway is one-carbon metabolism; tetrahydrofolate interconversion. It participates in amino-acid biosynthesis; L-methionine biosynthesis via de novo pathway. Its function is as follows. Catalyzes the NADH-dependent reduction of 5,10-methylenetetrahydrofolate to 5-methyltetrahydrofolate. Is required to provide the methyl group necessary for methionine synthetase to convert homocysteine to methionine; the methyl group is given by 5-methyltetrahydrofolate. The protein is 5,10-methylenetetrahydrofolate reductase (metF) of Salmonella typhimurium (strain LT2 / SGSC1412 / ATCC 700720).